The sequence spans 323 residues: MTSVVSSARRTIRIGSRKSQLALVQTYWVREQLQNSFPDINFEVHTMSTQGDKILDVALAKIGDKGLFTKELEVGMINEEIDFAVHSLKDLPTNLPEGLALAAITERENPADALVVHENFKDKQIDTLPAGAVIGTSSLRRLAQLRNQFPHLTFKDVRGNLNTRLAKLDAGEYDGLILAAAGLQRLGMGDRVHQILPKEISLHAVGQGALGIECRADDAELITVLKAIEHPETRDRCLAERSFLRSLEGGCQVPIGVNTEINGNELILTGVVASVDGQNLVKDTVSGNASDAEAIGIRLAELLREQGAQEILNTIFAEIQRGS.

At C251 the chain carries S-(dipyrrolylmethanemethyl)cysteine.

This sequence belongs to the HMBS family. Monomer. Dipyrromethane is required as a cofactor.

It catalyses the reaction 4 porphobilinogen + H2O = hydroxymethylbilane + 4 NH4(+). The protein operates within porphyrin-containing compound metabolism; protoporphyrin-IX biosynthesis; coproporphyrinogen-III from 5-aminolevulinate: step 2/4. Its pathway is porphyrin-containing compound metabolism; chlorophyll biosynthesis. Tetrapolymerization of the monopyrrole PBG into the hydroxymethylbilane pre-uroporphyrinogen in several discrete steps. The polypeptide is Porphobilinogen deaminase (hemC) (Nostoc sp. (strain PCC 7120 / SAG 25.82 / UTEX 2576)).